We begin with the raw amino-acid sequence, 245 residues long: Uridylate kinase (245 aa).

20 to 23 contacts ATP; it reads KVSG. G62 serves as a coordination point for UMP. ATP is bound by residues G63 and R67. UMP contacts are provided by residues D81 and 142 to 149; that span reads IGSPFFTT. ATP is bound by residues T169, Q170, Y175, and D178.

The protein belongs to the UMP kinase family. Homohexamer.

The protein localises to the cytoplasm. It carries out the reaction UMP + ATP = UDP + ADP. Its pathway is pyrimidine metabolism; CTP biosynthesis via de novo pathway; UDP from UMP (UMPK route): step 1/1. Its activity is regulated as follows. Inhibited by UTP. Functionally, catalyzes the reversible phosphorylation of UMP to UDP. The sequence is that of Uridylate kinase from Anaplasma marginale (strain St. Maries).